The chain runs to 144 residues: Large ribosomal subunit protein uL11 (144 aa).

It belongs to the universal ribosomal protein uL11 family. In terms of assembly, part of the ribosomal stalk of the 50S ribosomal subunit. Interacts with L10 and the large rRNA to form the base of the stalk. L10 forms an elongated spine to which L12 dimers bind in a sequential fashion forming a multimeric L10(L12)X complex. One or more lysine residues are methylated.

In terms of biological role, forms part of the ribosomal stalk which helps the ribosome interact with GTP-bound translation factors. The sequence is that of Large ribosomal subunit protein uL11 from Francisella tularensis subsp. holarctica (strain OSU18).